The sequence spans 377 residues: Phospho-N-acetylmuramoyl-pentapeptide-transferase (377 aa).

Helical transmembrane passes span 9–29 (YITL…LVAG), 62–82 (MGGA…ADWI), 85–105 (FVWV…MDDY), 122–142 (FFWQ…AVSA), 155–175 (WVGS…VPFF), 178–198 (VSYP…IVGT), 210–230 (GLAI…AYVV), 247–267 (AAEL…FLWF), 274–294 (VFMG…IAVI), 299–319 (IVLF…MVQV), and 354–374 (QVVV…LSTL).

The protein belongs to the glycosyltransferase 4 family. MraY subfamily. Mg(2+) is required as a cofactor.

It localises to the cell inner membrane. The enzyme catalyses UDP-N-acetyl-alpha-D-muramoyl-L-alanyl-gamma-D-glutamyl-meso-2,6-diaminopimeloyl-D-alanyl-D-alanine + di-trans,octa-cis-undecaprenyl phosphate = di-trans,octa-cis-undecaprenyl diphospho-N-acetyl-alpha-D-muramoyl-L-alanyl-D-glutamyl-meso-2,6-diaminopimeloyl-D-alanyl-D-alanine + UMP. It participates in cell wall biogenesis; peptidoglycan biosynthesis. Its function is as follows. Catalyzes the initial step of the lipid cycle reactions in the biosynthesis of the cell wall peptidoglycan: transfers peptidoglycan precursor phospho-MurNAc-pentapeptide from UDP-MurNAc-pentapeptide onto the lipid carrier undecaprenyl phosphate, yielding undecaprenyl-pyrophosphoryl-MurNAc-pentapeptide, known as lipid I. This chain is Phospho-N-acetylmuramoyl-pentapeptide-transferase, found in Bordetella parapertussis (strain 12822 / ATCC BAA-587 / NCTC 13253).